The sequence spans 443 residues: Xaa-Pro dipeptidase (443 aa).

Residues D244, D255, H336, E381, and E420 each contribute to the Mn(2+) site.

Belongs to the peptidase M24B family. Bacterial-type prolidase subfamily. Mn(2+) is required as a cofactor.

It carries out the reaction Xaa-L-Pro dipeptide + H2O = an L-alpha-amino acid + L-proline. Splits dipeptides with a prolyl residue in the C-terminal position. This is Xaa-Pro dipeptidase from Stenotrophomonas maltophilia (strain K279a).